The following is a 166-amino-acid chain: MRIVNAADPFSINDLGCGYGALLDYLDARGFKTDYTGIDVSPEMVRAAALRFEGRANADFICAARIDREADYSVASGIFNVRLKSLDTEWCAHIEATLDMLNAASRRGFSFNCLTSYSDASKMRDDLYYADPCALFDLCKRRYSKSVALLHDYGLYEFTILVRKAS.

Belongs to the methyltransferase superfamily.

Its function is as follows. Probably plays a role in host phagosome maturation arrest, as well as a role in the synthesis of acyltrehalose-containing glycolipids. The polypeptide is Putative methyltransferase Rv1506c (Mycobacterium tuberculosis (strain ATCC 25618 / H37Rv)).